The sequence spans 228 residues: Apoptosis regulator R1 (228 aa).

A compositionally biased stretch (basic and acidic residues) spans 1–21; it reads LNPKKKENNGVKNGDREKQHE. The disordered stretch occupies residues 1 to 29; the sequence is LNPKKKENNGVKNGDREKQHETGNTIFRG. The BH1 signature appears at 120–139; the sequence is SLFQGGVNWGRIVAFFVFGA. Residues 171 to 186 carry the BH2 motif; it reads DWIQSNGGWNGFLTLY. Residues 207-227 traverse the membrane as a helical segment; sequence TVLTGAVALGALMTVGALFAS.

It belongs to the Bcl-2 family.

It is found in the membrane. Could be the homolog of mammalian Bcl-W. The chain is Apoptosis regulator R1 from Xenopus laevis (African clawed frog).